A 335-amino-acid polypeptide reads, in one-letter code: N-acetyl-gamma-glutamyl-phosphate reductase (335 aa).

Cys156 is an active-site residue.

This sequence belongs to the NAGSA dehydrogenase family. Type 1 subfamily.

It localises to the cytoplasm. It catalyses the reaction N-acetyl-L-glutamate 5-semialdehyde + phosphate + NADP(+) = N-acetyl-L-glutamyl 5-phosphate + NADPH + H(+). Its pathway is amino-acid biosynthesis; L-arginine biosynthesis; N(2)-acetyl-L-ornithine from L-glutamate: step 3/4. Functionally, catalyzes the NADPH-dependent reduction of N-acetyl-5-glutamyl phosphate to yield N-acetyl-L-glutamate 5-semialdehyde. The sequence is that of N-acetyl-gamma-glutamyl-phosphate reductase from Tolumonas auensis (strain DSM 9187 / NBRC 110442 / TA 4).